The chain runs to 102 residues: Anti-lipopolysaccharide factor (102 aa).

Residues Cys-32 and Cys-53 are joined by a disulfide bond.

Binds tightly to LPS and thus specifically inhibits the LPS-mediated activation of the hemolymph coagulation. It has a strong antibacterial effect especially on the growth of Gram-negative bacteria. In Tachypleus tridentatus (Japanese horseshoe crab), this protein is Anti-lipopolysaccharide factor.